The sequence spans 229 residues: Thylakoid lumenal 19 kDa protein, chloroplastic (229 aa).

The protein resides in the plastid. Its subcellular location is the chloroplast thylakoid lumen. The polypeptide is Thylakoid lumenal 19 kDa protein, chloroplastic (Arabidopsis thaliana (Mouse-ear cress)).